The sequence spans 268 residues: Nitrite transporter NirC (268 aa).

Residues 1 to 25 (MFTDTINKCAANAARIARLSANNPL) are Cytoplasmic-facing. The helical transmembrane segment at 26–46 (GFWVSSAMAGAYVGLGIILIF) threads the bilayer. Residues 47–59 (TLGNLLDPSVRPL) lie on the Periplasmic side of the membrane. Residues 60 to 80 (VMGATFGIALTLVIIAGSELF) traverse the membrane as a helical segment. The Cytoplasmic portion of the chain corresponds to 81-112 (TGHTMFLTFGVKAGSISHGQMWAILPQTWLGN). A helical membrane pass occupies residues 113-133 (LVGSVFVAMLYSWGGGSLLPV). The Periplasmic segment spans residues 134-151 (DTSIVHSVALAKTTAPAM). Residues 152-172 (VLFFKGALCNWLVCLAIWMAL) traverse the membrane as a helical segment. At 173–179 (RTEGAAK) the chain is on the cytoplasmic side. The helical transmembrane segment at 180–200 (FIAIWWCLLAFIASGYEHSIA) threads the bilayer. Residues 201-225 (NMTLFALSWFGNHSEAYTLAGIGHN) are Periplasmic-facing. The chain crosses the membrane as a helical span at residues 226 to 246 (LLWVTLGNTLSGAVFMGLGYW). Residues 247–268 (YATPKANRPVADKFNQTETAAG) lie on the Cytoplasmic side of the membrane.

The protein belongs to the FNT transporter (TC 1.A.16) family.

The protein localises to the cell inner membrane. Functionally, catalyzes nitrite uptake and nitrite export across the cytoplasmic membrane. Is up to 10-fold more active than NarK or NarU in nitrite uptake for subsequent reduction in the cytoplasm by the NirB/NirD nitrite reductase. The chain is Nitrite transporter NirC (nirC) from Escherichia coli (strain K12).